The primary structure comprises 185 residues: Elongation factor P (185 aa).

This sequence belongs to the elongation factor P family.

The protein resides in the cytoplasm. The protein operates within protein biosynthesis; polypeptide chain elongation. In terms of biological role, involved in peptide bond synthesis. Stimulates efficient translation and peptide-bond synthesis on native or reconstituted 70S ribosomes in vitro. Probably functions indirectly by altering the affinity of the ribosome for aminoacyl-tRNA, thus increasing their reactivity as acceptors for peptidyl transferase. This chain is Elongation factor P, found in Deinococcus deserti (strain DSM 17065 / CIP 109153 / LMG 22923 / VCD115).